Reading from the N-terminus, the 935-residue chain is C-1-tetrahydrofolate synthase, cytoplasmic (935 aa).

N-acetylmethionine is present on Met-1. A methylenetetrahydrofolate dehydrogenase and methenyltetrahydrofolate cyclohydrolase (D/C) domain region spans residues Ala-2–Ala-291. Substrate contacts are provided by residues Tyr-52–Lys-56 and Val-99–Leu-101. The active site involves Lys-56. Residues Gly-172–Ser-174 and Ser-197 contribute to the NADP(+) site. Pro-272–Gly-276 lines the substrate pocket. A formyltetrahydrofolate synthetase domain region spans residues Leu-310–Phe-935. Ser-318 carries the phosphoserine modification. An ATP-binding site is contributed by Thr-380–Ser-387. A phosphoserine mark is found at Ser-413 and Ser-490.

In the N-terminal section; belongs to the tetrahydrofolate dehydrogenase/cyclohydrolase family. The protein in the C-terminal section; belongs to the formate--tetrahydrofolate ligase family. In terms of assembly, homodimer.

It localises to the cytoplasm. It catalyses the reaction (6R)-5,10-methylene-5,6,7,8-tetrahydrofolate + NADP(+) = (6R)-5,10-methenyltetrahydrofolate + NADPH. The enzyme catalyses (6R)-5,10-methenyltetrahydrofolate + H2O = (6R)-10-formyltetrahydrofolate + H(+). It carries out the reaction (6S)-5,6,7,8-tetrahydrofolate + formate + ATP = (6R)-10-formyltetrahydrofolate + ADP + phosphate. The protein operates within one-carbon metabolism; tetrahydrofolate interconversion. In terms of biological role, trifunctional enzyme that catalyzes the interconversion of three forms of one-carbon-substituted tetrahydrofolate: (6R)-5,10-methylene-5,6,7,8-tetrahydrofolate, 5,10-methenyltetrahydrofolate and (6S)-10-formyltetrahydrofolate. These derivatives of tetrahydrofolate are differentially required in nucleotide and amino acid biosynthesis, (6S)-10-formyltetrahydrofolate being required for purine biosynthesis while (6R)-5,10-methylene-5,6,7,8-tetrahydrofolate is used for serine and methionine biosynthesis for instance. The protein is C-1-tetrahydrofolate synthase, cytoplasmic (Mthfd1) of Mus musculus (Mouse).